The sequence spans 106 residues: MGRKKGLPEFEESAPDGFDPENPYKDPVAMVEMREHIVREKWIQIEKAKILREKVKWCYRVEGVNHYQKCRHLVQQYLDSTRGVGWGKDHRPISLHGPKPEAVEAE.

Residues 1–25 are disordered; it reads MGRKKGLPEFEESAPDGFDPENPYK.

The protein belongs to the complex I NDUFB10 subunit family. In terms of assembly, complex I is composed of at least 49 different subunits.

It localises to the mitochondrion inner membrane. Its function is as follows. Accessory subunit of the mitochondrial membrane respiratory chain NADH dehydrogenase (Complex I), that is believed not to be involved in catalysis. Complex I functions in the transfer of electrons from NADH to the respiratory chain. The immediate electron acceptor for the enzyme is believed to be ubiquinone. This Arabidopsis thaliana (Mouse-ear cress) protein is NADH dehydrogenase [ubiquinone] 1 beta subcomplex subunit 10-B.